The primary structure comprises 422 residues: Lipase member M (422 aa).

The N-terminal stretch at 1-33 (MSEILSRVWTVSHRVEIWLLILVAYLLQRNVNS) is a signal peptide. Asparagine 48 carries an N-linked (GlcNAc...) asparagine glycan. Residues 92–392 (PVVLLQHGLL…EWAHVDFIWG (301 aa)) form the AB hydrolase-1 domain. Serine 186 acts as the Nucleophile in catalysis. A disulfide bridge links cysteine 260 with cysteine 269. Catalysis depends on charge relay system residues aspartate 357 and histidine 386.

This sequence belongs to the AB hydrolase superfamily. Lipase family.

The protein resides in the secreted. Functionally, plays a highly specific role in the last step of keratinocyte differentiation. May have an essential function in lipid metabolism of the most differentiated epidermal layers. The protein is Lipase member M (Lipm) of Mus musculus (Mouse).